The primary structure comprises 89 residues: Small ribosomal subunit protein uS17 (89 aa).

It belongs to the universal ribosomal protein uS17 family. Part of the 30S ribosomal subunit.

Its function is as follows. One of the primary rRNA binding proteins, it binds specifically to the 5'-end of 16S ribosomal RNA. This Coxiella burnetii (strain RSA 331 / Henzerling II) protein is Small ribosomal subunit protein uS17.